The chain runs to 245 residues: Ribosomal RNA large subunit methyltransferase E (245 aa).

Residues 1–26 (MTKPPVGSNRSGRKLGQKVKKGKLKA) form a disordered region. Residues 11-26 (SGRKLGQKVKKGKLKA) show a composition bias toward basic residues. Positions 81, 83, 104, 120, and 144 each coordinate S-adenosyl-L-methionine. The active-site Proton acceptor is lysine 184.

This sequence belongs to the class I-like SAM-binding methyltransferase superfamily. RNA methyltransferase RlmE family.

It localises to the cytoplasm. The enzyme catalyses uridine(2552) in 23S rRNA + S-adenosyl-L-methionine = 2'-O-methyluridine(2552) in 23S rRNA + S-adenosyl-L-homocysteine + H(+). Functionally, specifically methylates the uridine in position 2552 of 23S rRNA at the 2'-O position of the ribose in the fully assembled 50S ribosomal subunit. This Sinorhizobium medicae (strain WSM419) (Ensifer medicae) protein is Ribosomal RNA large subunit methyltransferase E.